The following is an 872-amino-acid chain: DNA mismatch repair protein MutS (872 aa).

ATP is bound at residue 622–629 (GPNMAGKS).

The protein belongs to the DNA mismatch repair MutS family.

Functionally, this protein is involved in the repair of mismatches in DNA. It is possible that it carries out the mismatch recognition step. This protein has a weak ATPase activity. This Geobacter metallireducens (strain ATCC 53774 / DSM 7210 / GS-15) protein is DNA mismatch repair protein MutS.